The following is a 289-amino-acid chain: MLKNLFRKTKYITVSQKNIENYKRENTPTIPDGMWVKCNKCGEILYQNDLEKNYMVCNLCGNHFRIGVKERIKYLFDKDTFKEWDYKIKTENPLDFKGYDEKIEHIKEKTNLSEAVTTGKCKIAGMEVVVCIMDSKFMMGSMGSVVGEKITRAIERAIGLRLPVIIFTASGGARMQEGILSLMQMAKVSSALAKLDEEGLLYICVLTDPTTGGVTASFAMLGDIILAEPDALIGFAGKRVIEQTINEKLPEDFQKSEFLLEHGFIDKIVPRSDLRKVLAKLINMHQNSF.

A CoA carboxyltransferase N-terminal domain is found at 34–289 (MWVKCNKCGE…KLINMHQNSF (256 aa)). Zn(2+) is bound by residues Cys38, Cys41, Cys57, and Cys60. The C4-type zinc-finger motif lies at 38-60 (CNKCGEILYQNDLEKNYMVCNLC).

This sequence belongs to the AccD/PCCB family. In terms of assembly, acetyl-CoA carboxylase is a heterohexamer composed of biotin carboxyl carrier protein (AccB), biotin carboxylase (AccC) and two subunits each of ACCase subunit alpha (AccA) and ACCase subunit beta (AccD). It depends on Zn(2+) as a cofactor.

The protein localises to the cytoplasm. The catalysed reaction is N(6)-carboxybiotinyl-L-lysyl-[protein] + acetyl-CoA = N(6)-biotinyl-L-lysyl-[protein] + malonyl-CoA. The protein operates within lipid metabolism; malonyl-CoA biosynthesis; malonyl-CoA from acetyl-CoA: step 1/1. Its function is as follows. Component of the acetyl coenzyme A carboxylase (ACC) complex. Biotin carboxylase (BC) catalyzes the carboxylation of biotin on its carrier protein (BCCP) and then the CO(2) group is transferred by the transcarboxylase to acetyl-CoA to form malonyl-CoA. The protein is Acetyl-coenzyme A carboxylase carboxyl transferase subunit beta of Clostridium botulinum (strain ATCC 19397 / Type A).